A 269-amino-acid chain; its full sequence is Indole-3-glycerol phosphate synthase (269 aa).

It belongs to the TrpC family.

The enzyme catalyses 1-(2-carboxyphenylamino)-1-deoxy-D-ribulose 5-phosphate + H(+) = (1S,2R)-1-C-(indol-3-yl)glycerol 3-phosphate + CO2 + H2O. The protein operates within amino-acid biosynthesis; L-tryptophan biosynthesis; L-tryptophan from chorismate: step 4/5. The sequence is that of Indole-3-glycerol phosphate synthase from Rhodococcus jostii (strain RHA1).